Here is a 208-residue protein sequence, read N- to C-terminus: Large ribosomal subunit protein uL4 (208 aa).

Over residues alanine 47–arginine 58 the composition is skewed to basic and acidic residues. The segment at alanine 47–glycine 84 is disordered.

It belongs to the universal ribosomal protein uL4 family. Part of the 50S ribosomal subunit.

In terms of biological role, one of the primary rRNA binding proteins, this protein initially binds near the 5'-end of the 23S rRNA. It is important during the early stages of 50S assembly. It makes multiple contacts with different domains of the 23S rRNA in the assembled 50S subunit and ribosome. Forms part of the polypeptide exit tunnel. The polypeptide is Large ribosomal subunit protein uL4 (Sphingopyxis alaskensis (strain DSM 13593 / LMG 18877 / RB2256) (Sphingomonas alaskensis)).